A 499-amino-acid polypeptide reads, in one-letter code: L-asparagine permease (499 aa).

Helical transmembrane passes span 34 to 54, 58 to 78, 109 to 129, 146 to 166, 171 to 191, 219 to 239, 264 to 284, 298 to 318, 353 to 373, 378 to 398, 422 to 442, and 448 to 468; these read QVQM…GAGA, MAGP…FFIL, VAGW…ITAV, VFAL…VKWF, FWFA…GTVF, LLPA…IEMV, IGLF…WSAY, LGVP…ALSS, YAGI…NYLV, FEIV…FIIV, APFT…LMAF, and TYTI…WFGV.

Belongs to the amino acid-polyamine-organocation (APC) superfamily. Amino acid transporter (AAT) (TC 2.A.3.1) family.

The protein resides in the cell inner membrane. This chain is L-asparagine permease (ansP), found in Escherichia coli (strain K12).